We begin with the raw amino-acid sequence, 145 residues long: HTH-type transcriptional regulator MhqR (145 aa).

The 133-residue stretch at 5 to 137 folds into the HTH marR-type domain; that stretch reads SLKLFIVLSR…CTEMLKRVGL (133 aa). The segment at residues 51-74 is a DNA-binding region (H-T-H motif); that stretch reads LQQIGDKILLASGSITYVVDKLEQ.

Functionally, negatively regulates mhqA, mhqED, mhqNOP, and azoR2 which may contribute to the degradation of aromatic compounds. In Bacillus subtilis (strain 168), this protein is HTH-type transcriptional regulator MhqR (mhqR).